A 79-amino-acid polypeptide reads, in one-letter code: Cyclotide phyb-A (79 aa).

A propeptide spanning residues 1–43 (MVGVNSLRSALYLIVLILFVQLTYFSDARVMDVDLSRAFLPLT) is cleaved from the precursor. A cross-link (cyclopeptide (Gly-Asn)) is located at residues 44–73 (GIGCGESCVWIPCVSAAIGCSCSNKICYRN). 3 disulfides stabilise this stretch: Cys-47–Cys-63, Cys-51–Cys-65, and Cys-56–Cys-70. Residues 74 to 79 (GIIPKK) constitute a propeptide that is removed on maturation.

Post-translationally, this is a cyclic peptide. Contains 3 disulfide bonds. Expressed in midvein, lamina and periphery of leaves (at protein level).

In terms of biological role, probably participates in a plant defense mechanism. The chain is Cyclotide phyb-A from Petunia hybrida (Petunia).